The chain runs to 358 residues: Malate dehydrogenase 2, glyoxysomal (358 aa).

The N-terminal 38 residues, 1 to 38 (MEFRGDANKRIAMISAHLQPSFTPQMEAKNSVMGRENC), are a transit peptide targeting the glyoxysome. NAD(+) is bound by residues 53-59 (GAAGGIG) and aspartate 79. 2 residues coordinate substrate: arginine 126 and arginine 132. NAD(+) contacts are provided by residues asparagine 139 and 162–164 (ISN). Positions 164 and 198 each coordinate substrate. Histidine 222 functions as the Proton acceptor in the catalytic mechanism. NAD(+) is bound at residue methionine 273.

Belongs to the LDH/MDH superfamily. MDH type 1 family. In terms of assembly, homodimer.

The protein resides in the glyoxysome. It catalyses the reaction (S)-malate + NAD(+) = oxaloacetate + NADH + H(+). In Brassica napus (Rape), this protein is Malate dehydrogenase 2, glyoxysomal (MDH2).